We begin with the raw amino-acid sequence, 252 residues long: Chitooligosaccharide deacetylase (252 aa).

The Mg(2+) site is built by His-61 and His-125.

The protein belongs to the YdjC deacetylase family. ChbG subfamily. In terms of assembly, homodimer. Mg(2+) serves as cofactor.

It is found in the cytoplasm. The enzyme catalyses N,N'-diacetylchitobiose + H2O = N-acetyl-beta-D-glucosaminyl-(1-&gt;4)-D-glucosamine + acetate. The catalysed reaction is diacetylchitobiose-6'-phosphate + H2O = N'-monoacetylchitobiose-6'-phosphate + acetate. It participates in glycan degradation; chitin degradation. Involved in the degradation of chitin. ChbG is essential for growth on the acetylated chitooligosaccharides chitobiose and chitotriose but is dispensable for growth on cellobiose and chitosan dimer, the deacetylated form of chitobiose. Deacetylation of chitobiose-6-P and chitotriose-6-P is necessary for both the activation of the chb promoter by the regulatory protein ChbR and the hydrolysis of phosphorylated beta-glucosides by the phospho-beta-glucosidase ChbF. Catalyzes the removal of only one acetyl group from chitobiose-6-P to yield monoacetylchitobiose-6-P, the inducer of ChbR and the substrate of ChbF. The protein is Chitooligosaccharide deacetylase of Escherichia coli O6:H1 (strain CFT073 / ATCC 700928 / UPEC).